A 764-amino-acid chain; its full sequence is 5-methyltetrahydropteroyltriglutamate--homocysteine methyltransferase (764 aa).

Residues 16–19 and Lys-121 each bind 5-methyltetrahydropteroyltri-L-glutamate; that span reads RELK. Residues 440 to 442 and Glu-493 each bind L-homocysteine; that span reads IGS. L-methionine is bound by residues 440–442 and Glu-493; that span reads IGS. 5-methyltetrahydropteroyltri-L-glutamate is bound by residues 524–525 and Trp-570; that span reads RC. Asp-608 provides a ligand contact to L-homocysteine. Position 608 (Asp-608) interacts with L-methionine. Glu-614 serves as a coordination point for 5-methyltetrahydropteroyltri-L-glutamate. His-650, Cys-652, and Glu-674 together coordinate Zn(2+). The active-site Proton donor is the His-703. Position 735 (Cys-735) interacts with Zn(2+).

This sequence belongs to the vitamin-B12 independent methionine synthase family. It depends on Zn(2+) as a cofactor.

It catalyses the reaction 5-methyltetrahydropteroyltri-L-glutamate + L-homocysteine = tetrahydropteroyltri-L-glutamate + L-methionine. It participates in amino-acid biosynthesis; L-methionine biosynthesis via de novo pathway; L-methionine from L-homocysteine (MetE route): step 1/1. Its function is as follows. Catalyzes the transfer of a methyl group from 5-methyltetrahydrofolate to homocysteine resulting in methionine formation. In Burkholderia lata (strain ATCC 17760 / DSM 23089 / LMG 22485 / NCIMB 9086 / R18194 / 383), this protein is 5-methyltetrahydropteroyltriglutamate--homocysteine methyltransferase.